Reading from the N-terminus, the 510-residue chain is 2,3-bisphosphoglycerate-independent phosphoglycerate mutase (510 aa).

Mn(2+)-binding residues include D12 and S62. Residue S62 is the Phosphoserine intermediate of the active site. Residues H123, 153–154 (RD), R185, R191, 260–263 (RPDR), and K335 contribute to the substrate site. Residues D402, H406, D443, H444, and H461 each contribute to the Mn(2+) site.

It belongs to the BPG-independent phosphoglycerate mutase family. Monomer. Mn(2+) serves as cofactor.

The enzyme catalyses (2R)-2-phosphoglycerate = (2R)-3-phosphoglycerate. Its pathway is carbohydrate degradation; glycolysis; pyruvate from D-glyceraldehyde 3-phosphate: step 3/5. Its function is as follows. Catalyzes the interconversion of 2-phosphoglycerate and 3-phosphoglycerate. This is 2,3-bisphosphoglycerate-independent phosphoglycerate mutase from Listeria innocua serovar 6a (strain ATCC BAA-680 / CLIP 11262).